The sequence spans 134 residues: Phosphoribosyl-AMP cyclohydrolase (134 aa).

Asp80 serves as a coordination point for Mg(2+). Residue Cys81 coordinates Zn(2+). Asp82 and Asp84 together coordinate Mg(2+). Zn(2+) is bound by residues Cys98 and Cys105.

It belongs to the PRA-CH family. As to quaternary structure, homodimer. Requires Mg(2+) as cofactor. Zn(2+) is required as a cofactor.

The protein resides in the cytoplasm. It carries out the reaction 1-(5-phospho-beta-D-ribosyl)-5'-AMP + H2O = 1-(5-phospho-beta-D-ribosyl)-5-[(5-phospho-beta-D-ribosylamino)methylideneamino]imidazole-4-carboxamide. It functions in the pathway amino-acid biosynthesis; L-histidine biosynthesis; L-histidine from 5-phospho-alpha-D-ribose 1-diphosphate: step 3/9. Functionally, catalyzes the hydrolysis of the adenine ring of phosphoribosyl-AMP. The chain is Phosphoribosyl-AMP cyclohydrolase from Janthinobacterium sp. (strain Marseille) (Minibacterium massiliensis).